Here is an 88-residue protein sequence, read N- to C-terminus: DNA-directed RNA polymerase subunit omega (88 aa).

The protein belongs to the RNA polymerase subunit omega family. The RNAP catalytic core consists of 2 alpha, 1 beta, 1 beta' and 1 omega subunit. When a sigma factor is associated with the core the holoenzyme is formed, which can initiate transcription.

The catalysed reaction is RNA(n) + a ribonucleoside 5'-triphosphate = RNA(n+1) + diphosphate. Its function is as follows. Promotes RNA polymerase assembly. Latches the N- and C-terminal regions of the beta' subunit thereby facilitating its interaction with the beta and alpha subunits. This is DNA-directed RNA polymerase subunit omega from Pseudomonas aeruginosa (strain LESB58).